We begin with the raw amino-acid sequence, 714 residues long: SEC14 domain and spectrin repeat-containing protein 1 (714 aa).

The 153-residue stretch at 1 to 153 folds into the CRAL-TRIO domain; the sequence is MEASCILPVL…EFGGSLLYDH (153 aa). 3 Spectrin repeats span residues 275–381, 384–497, and 503–605; these read SQLE…NVLQ, YEFH…LKML, and FKCE…HRLE. The interval 691–714 is disordered; that stretch reads EAEQRLEEEEEEEEAALEVEPRES. Over residues 696 to 707 the composition is skewed to acidic residues; sequence LEEEEEEEEAAL.

It belongs to the SOLO family.

May act as the primary docking protein directing membrane turnover and assembly of the transient receptor potential channels trpc4 and trpc5. Binds phospholipids. The protein is SEC14 domain and spectrin repeat-containing protein 1 (sestd1) of Danio rerio (Zebrafish).